A 357-amino-acid chain; its full sequence is Glucose-6-phosphatase catalytic subunit 1 (357 aa).

Topologically, residues 1-28 (MEKGMNVLHDFGIQSTHYLQVNYQDSQD) are lumenal. The helical transmembrane segment at 29-49 (WFILVSVIADLRNAFYVLFPI) threads the bilayer. Over 50-60 (WFHLREAVGIK) the chain is Cytoplasmic. Residues 61–81 (LLWVAVIGDWLNLVFKWILFG) form a helical membrane-spanning segment. The Lumenal segment spans residues 82–117 (QRPYWWVMDTDYYSNASVPLIKQFPVTCETGPGSPS). Arg-83 contacts substrate. Asn-96 carries an N-linked (GlcNAc...) asparagine glycan. Residues 118–138 (GHAMGTAGVYYVMVTSTLSMF) form a helical membrane-spanning segment. The Proton donor role is filled by His-119. The Cytoplasmic segment spans residues 139–147 (RGKKKPTYR). A helical membrane pass occupies residues 148-168 (FRCLNVILWLGFWAVQLNVCL). At 169-170 (SR) the chain is on the lumenal side. Arg-170 lines the substrate pocket. Residues 171 to 191 (IYLAAHFPHQVVAGVLSGIAV) form a helical membrane-spanning segment. His-176 functions as the Nucleophile in the catalytic mechanism. Over 192–209 (AETFRHIQSIYNASLKKY) the chain is Cytoplasmic. Residues 210–230 (FFITFFLLSFAIGFYLLLKGL) form a helical membrane-spanning segment. Over 231–254 (GVDLLWTLEKARRWCERPEWVHID) the chain is Lumenal. The helical transmembrane segment at 255–275 (TTPFASLLKNVGTLFGLGLAL) threads the bilayer. The Cytoplasmic segment spans residues 276–291 (NSSMYRESCKGTLSKW). A helical transmembrane segment spans residues 292 to 312 (FPFRLSCIVVSLILLHLFDSL). At 313-320 (KPPSQIEL) the chain is on the lumenal side. The helical transmembrane segment at 321 to 341 (IFYVLSFCKSAAVPLASVSLI) threads the bilayer. The Cytoplasmic portion of the chain corresponds to 342-357 (PYCLARVLGQPDKKSL). The Prevents secretion from ER signature appears at 354-357 (KKSL).

The protein belongs to the glucose-6-phosphatase family.

Its subcellular location is the endoplasmic reticulum membrane. It carries out the reaction D-glucose 6-phosphate + H2O = D-glucose + phosphate. Its pathway is carbohydrate biosynthesis; gluconeogenesis. Hydrolyzes glucose-6-phosphate to glucose in the endoplasmic reticulum. Forms with the glucose-6-phosphate transporter (SLC37A4/G6PT) the complex responsible for glucose production in the terminal step of glycogenolysis and gluconeogenesis. Hence, it is the key enzyme in homeostatic regulation of blood glucose levels. The chain is Glucose-6-phosphatase catalytic subunit 1 (G6PC1) from Felis catus (Cat).